Here is a 115-residue protein sequence, read N- to C-terminus: UPF0102 protein Kole_1919 (115 aa).

The protein belongs to the UPF0102 family.

This is UPF0102 protein Kole_1919 from Kosmotoga olearia (strain ATCC BAA-1733 / DSM 21960 / TBF 19.5.1).